The primary structure comprises 197 residues: UPF0314 protein NGR_c32320 (197 aa).

The next 3 helical transmembrane spans lie at 16 to 36 (WIWL…QHLM), 66 to 86 (WYTP…YLLL), and 152 to 172 (LPVA…GWII).

This sequence belongs to the UPF0314 family.

It is found in the cell membrane. In Sinorhizobium fredii (strain NBRC 101917 / NGR234), this protein is UPF0314 protein NGR_c32320.